A 328-amino-acid polypeptide reads, in one-letter code: Glycerophosphodiester phosphodiesterase GDPD4 (328 aa).

The helical transmembrane segment at 35–55 (TILFAVIFLAIFPPLYFHFKL) threads the bilayer. A GP-PDE domain is found at 73 to 312 (PLVCAHGGDS…SDPSMFQGLM (240 aa)).

The protein belongs to the glycerophosphoryl diester phosphodiesterase family. In terms of tissue distribution, expressed in rosette and cauline leaves.

It is found in the membrane. It carries out the reaction a sn-glycero-3-phosphodiester + H2O = an alcohol + sn-glycerol 3-phosphate + H(+). The chain is Glycerophosphodiester phosphodiesterase GDPD4 from Arabidopsis thaliana (Mouse-ear cress).